The following is a 335-amino-acid chain: Tetraacyldisaccharide 4'-kinase (335 aa).

58–65 contributes to the ATP binding site; that stretch reads TVGGSGKT.

It belongs to the LpxK family.

The catalysed reaction is a lipid A disaccharide + ATP = a lipid IVA + ADP + H(+). Its pathway is glycolipid biosynthesis; lipid IV(A) biosynthesis; lipid IV(A) from (3R)-3-hydroxytetradecanoyl-[acyl-carrier-protein] and UDP-N-acetyl-alpha-D-glucosamine: step 6/6. Its function is as follows. Transfers the gamma-phosphate of ATP to the 4'-position of a tetraacyldisaccharide 1-phosphate intermediate (termed DS-1-P) to form tetraacyldisaccharide 1,4'-bis-phosphate (lipid IVA). The protein is Tetraacyldisaccharide 4'-kinase of Shewanella sp. (strain ANA-3).